We begin with the raw amino-acid sequence, 482 residues long: UDP-N-acetylmuramate--L-alanine ligase (482 aa).

Position 122–128 (122–128) interacts with ATP; that stretch reads GTHGKTT.

This sequence belongs to the MurCDEF family.

It is found in the cytoplasm. The catalysed reaction is UDP-N-acetyl-alpha-D-muramate + L-alanine + ATP = UDP-N-acetyl-alpha-D-muramoyl-L-alanine + ADP + phosphate + H(+). Its pathway is cell wall biogenesis; peptidoglycan biosynthesis. Functionally, cell wall formation. This chain is UDP-N-acetylmuramate--L-alanine ligase, found in Mycolicibacterium smegmatis (strain ATCC 700084 / mc(2)155) (Mycobacterium smegmatis).